The sequence spans 159 residues: uncharacterized protein (159 aa).

This is an uncharacterized protein from Caenorhabditis elegans.